The chain runs to 509 residues: MEIRAAEISKVIREQIEGFGADAEVSEVGRVISVGDGIARVYGLDKVEAGEMVTFSSGVQGMALNLEADNVGVVIFGSDLEVGEGDTVRRTGQIVDVPVGPELLGRVVDALGNPIDGKGPINAKLRRRSEEMAPGIIPRKSVHEAVQTGIKALDALVPVGRGQRELIIGDRQTGKTAIAIDAFINQKQVNSGSDNTKKLFCIYVAIGQKRSTVAQIVRQLEEMGAMEYSIVVAATASEPAPLQYLVPYSACSMGEYFRDNKQHALIVYDDLSKQAVAYRQMSLLLRRPPGREAYPGDVFYLHSRLLERAAKMSDKMGAGSLTALPIIETQAGDVSAYIPTNVISITDGQIFLETDLFYQGIRPAINVGLSVSRVGSAAQTKAMKKVAGSIKLELAQYREMAAFAQFGSDLDASTQKLLNRGKRLTELLKQPQFHPMPFEEQVVSLFAGTNGYIDGIEVSDVNRYEEAMLSYMRSSHNDLLATIRETGDFSDETKSKLTAALDNFAKIFA.

ATP is bound at residue 169–176; that stretch reads GDRQTGKT.

This sequence belongs to the ATPase alpha/beta chains family. In terms of assembly, F-type ATPases have 2 components, CF(1) - the catalytic core - and CF(0) - the membrane proton channel. CF(1) has five subunits: alpha(3), beta(3), gamma(1), delta(1), epsilon(1). CF(0) has three main subunits: a(1), b(2) and c(9-12). The alpha and beta chains form an alternating ring which encloses part of the gamma chain. CF(1) is attached to CF(0) by a central stalk formed by the gamma and epsilon chains, while a peripheral stalk is formed by the delta and b chains.

The protein localises to the cell inner membrane. It carries out the reaction ATP + H2O + 4 H(+)(in) = ADP + phosphate + 5 H(+)(out). Produces ATP from ADP in the presence of a proton gradient across the membrane. The alpha chain is a regulatory subunit. This is ATP synthase subunit alpha from Zymomonas mobilis subsp. mobilis (strain ATCC 31821 / ZM4 / CP4).